Consider the following 319-residue polypeptide: tRNA uridine(34) hydroxylase (319 aa).

Residues 133–231 (EDPNSVVIDT…YLEDVSSENS (99 aa)) enclose the Rhodanese domain. Residue Cys191 is the Cysteine persulfide intermediate of the active site.

This sequence belongs to the TrhO family.

It catalyses the reaction uridine(34) in tRNA + AH2 + O2 = 5-hydroxyuridine(34) in tRNA + A + H2O. Catalyzes oxygen-dependent 5-hydroxyuridine (ho5U) modification at position 34 in tRNAs. This chain is tRNA uridine(34) hydroxylase, found in Prochlorococcus marinus (strain NATL2A).